Here is a 142-residue protein sequence, read N- to C-terminus: Endoribonuclease YbeY (142 aa).

Residues His-107, His-111, and Asp-117 each contribute to the Zn(2+) site.

It belongs to the endoribonuclease YbeY family. The cofactor is Zn(2+).

The protein resides in the cytoplasm. Single strand-specific metallo-endoribonuclease involved in late-stage 70S ribosome quality control and in maturation of the 3' terminus of the 16S rRNA. The sequence is that of Endoribonuclease YbeY from Parabacteroides distasonis (strain ATCC 8503 / DSM 20701 / CIP 104284 / JCM 5825 / NCTC 11152).